Here is a 141-residue protein sequence, read N- to C-terminus: ATP synthase epsilon chain (141 aa).

It belongs to the ATPase epsilon chain family. F-type ATPases have 2 components, CF(1) - the catalytic core - and CF(0) - the membrane proton channel. CF(1) has five subunits: alpha(3), beta(3), gamma(1), delta(1), epsilon(1). CF(0) has three main subunits: a, b and c.

It is found in the cell membrane. Functionally, produces ATP from ADP in the presence of a proton gradient across the membrane. This chain is ATP synthase epsilon chain, found in Lactococcus lactis subsp. cremoris (strain SK11).